The primary structure comprises 154 residues: MAKEKERIKVVSDNRQARFLYEILETYEAGIELQGTEVKSIRAGKVNLRDGFALLRDGEVWLMNVHISPYDKSSLFFNHDPRRTRRLLMHNWEIRKLIGQVEQKGLTLVPLKMYFKGSWVKVALGLGKGKKLHDKRETLKRRQDDRDMARAMKR.

The protein belongs to the SmpB family.

It localises to the cytoplasm. Its function is as follows. Required for rescue of stalled ribosomes mediated by trans-translation. Binds to transfer-messenger RNA (tmRNA), required for stable association of tmRNA with ribosomes. tmRNA and SmpB together mimic tRNA shape, replacing the anticodon stem-loop with SmpB. tmRNA is encoded by the ssrA gene; the 2 termini fold to resemble tRNA(Ala) and it encodes a 'tag peptide', a short internal open reading frame. During trans-translation Ala-aminoacylated tmRNA acts like a tRNA, entering the A-site of stalled ribosomes, displacing the stalled mRNA. The ribosome then switches to translate the ORF on the tmRNA; the nascent peptide is terminated with the 'tag peptide' encoded by the tmRNA and targeted for degradation. The ribosome is freed to recommence translation, which seems to be the essential function of trans-translation. The polypeptide is SsrA-binding protein (Synechocystis sp. (strain ATCC 27184 / PCC 6803 / Kazusa)).